We begin with the raw amino-acid sequence, 373 residues long: Flagellar P-ring protein (373 aa).

The first 28 residues, M1–A28, serve as a signal peptide directing secretion.

The protein belongs to the FlgI family. The basal body constitutes a major portion of the flagellar organelle and consists of four rings (L,P,S, and M) mounted on a central rod.

The protein localises to the periplasm. The protein resides in the bacterial flagellum basal body. Assembles around the rod to form the L-ring and probably protects the motor/basal body from shearing forces during rotation. This Rhodopseudomonas palustris (strain HaA2) protein is Flagellar P-ring protein.